We begin with the raw amino-acid sequence, 429 residues long: WRKY transcription factor 44 (429 aa).

Positions 159-223 (TGDRSSVDGY…YQGEHNHSKP (65 aa)) form a DNA-binding region, WRKY 1. Zn(2+)-binding residues include cysteine 190, cysteine 195, histidine 218, and histidine 220. Disordered regions lie at residues 214 to 279 (YQGE…RTEK) and 292 to 348 (AVPR…SDSL). Polar residues-rich tracts occupy residues 254–275 (QDPN…STQN), 295–313 (RSTN…SSQC), and 334–345 (SEAGVSQGSVES). A DNA-binding region (WRKY 2) is located at residues 343–408 (VESDSLEDGF…YEGKHNHHLL (66 aa)). Residues cysteine 374, cysteine 379, histidine 403, and histidine 405 each contribute to the Zn(2+) site. The segment covering 410–422 (SPPSSSTLPFNSP) has biased composition (low complexity). Residues 410–429 (SPPSSSTLPFNSPQLSKQTI) are disordered.

This sequence belongs to the WRKY group I family. Leaf promordia, trichomes, atrichoblasts, fertilized eggs, seed coat.

It is found in the nucleus. Its function is as follows. Transcription factor. Interacts specifically with the W box (5'-(T)TGAC[CT]-3'), a frequently occurring elicitor-responsive cis-acting element. Regulates trichome development, production of mucilage and tannin in seed coats, and maybe root hair development. This is WRKY transcription factor 44 (WRKY44) from Arabidopsis thaliana (Mouse-ear cress).